A 315-amino-acid chain; its full sequence is MADFTEQTLRQKLTNLSNHPSSIQTTSAWLLQNHSNRELIIRVWLKTVKKETHGSKIVNLLYVANDVSQNARKTCPQFKDEFFPAIESSFRHAIELKNAKEVEHAIGKLINVWKDRQIFTPSQCKRLHEVHQQVKLSGSFPTPAVANKEHGKVAQPSQFVVEEAKKNAQDVLLSLKRLQNPPSTEREIRTELSKYPDNISCPEKLQSVRSSQEAQSLLVQNEEALPMLEEYVKRLKNETNERETLESNLNMLIENVRMSIEHHEKLCREVKRREDRIKADLLEVEKTFESLPDLAAEMPNAPLPTLEALFEKRKK.

One can recognise a CID domain in the interval 1 to 135 (MADFTEQTLR…RLHEVHQQVK (135 aa)). Residues 227 to 273 (MLEEYVKRLKNETNERETLESNLNMLIENVRMSIEHHEKLCREVKRR) are a coiled coil.

This is CID domain-containing protein 1 (cids-1) from Caenorhabditis elegans.